Here is a 795-residue protein sequence, read N- to C-terminus: Protocadherin beta-5 (795 aa).

An N-terminal signal peptide occupies residues 1–30 (METALAKTPQKRQVMFLAILLLLWEAGSEA). Over 31–689 (VRYSIPEETE…AQADSLTVYL (659 aa)) the chain is Extracellular. 5 consecutive Cadherin domains span residues 35–133 (IPEE…APEF), 138–242 (MLLK…APEF), 247–346 (YEVQ…APEL), 351–450 (LSSP…APAF), and 455–560 (YTLF…SPFV). A glycan (N-linked (GlcNAc...) asparagine) is linked at Asn-169. N6-acetyllysine is present on Lys-296. N-linked (GlcNAc...) asparagine glycans are attached at residues Asn-417 and Asn-435. The N-linked (GlcNAc...) asparagine glycan is linked to Asn-566. Positions 567 to 670 (GSAPCTELVP…LVDGFSQPYL (104 aa)) constitute a Cadherin 6 domain. Residues 690–710 (VVALASVSSLFLFSVLLFVAV) traverse the membrane as a helical segment. Over 711-795 (RLCRRSRAAP…AAFRNSFGLN (85 aa)) the chain is Cytoplasmic.

It is found in the cell membrane. In terms of biological role, potential calcium-dependent cell-adhesion protein. May be involved in the establishment and maintenance of specific neuronal connections in the brain. The polypeptide is Protocadherin beta-5 (PCDHB5) (Homo sapiens (Human)).